The primary structure comprises 227 residues: GFP-like non-fluorescent chromoprotein (227 aa).

The 5-imidazolinone (Ala-Gly) cross-link spans 63 to 65 (AYG). At tyrosine 64 the chain carries 2,3-didehydrotyrosine.

This sequence belongs to the GFP family. In terms of assembly, homotetramer. Contains a chromophore consisting of modified amino acid residues. The chromophore is formed by autocatalytic backbone condensation between Xaa-N and Gly-(N+2), and oxidation of Tyr-(N+1) to didehydrotyrosine. Maturation of the chromophore requires nothing other than molecular oxygen. The precise stereochemistry of the tyrosine has not been determined.

In terms of biological role, non-fluorescent pigment protein that is mauve in color. The wild-type form is non-fluorescent. The sequence is that of GFP-like non-fluorescent chromoprotein from Condylactis gigantea (Giant Caribbean anemone).